Consider the following 125-residue polypeptide: Fluoride-specific ion channel FluC (125 aa).

A run of 2 helical transmembrane segments spans residues 4–24 and 34–54; these read LWVA…GVWI and YGTF…LTVL. Na(+)-binding residues include Gly-74 and Thr-77. Residues 99 to 119 form a helical membrane-spanning segment; it reads VLYFGSSLALGILAVWLGMVV.

It belongs to the fluoride channel Fluc/FEX (TC 1.A.43) family.

Its subcellular location is the cell inner membrane. The catalysed reaction is fluoride(in) = fluoride(out). Its activity is regulated as follows. Na(+) is not transported, but it plays an essential structural role and its presence is essential for fluoride channel function. Functionally, fluoride-specific ion channel. Important for reducing fluoride concentration in the cell, thus reducing its toxicity. This Acidobacterium capsulatum (strain ATCC 51196 / DSM 11244 / BCRC 80197 / JCM 7670 / NBRC 15755 / NCIMB 13165 / 161) protein is Fluoride-specific ion channel FluC.